The following is a 391-amino-acid chain: Ferrochelatase (391 aa).

Fe cation is bound by residues H196 and E281.

The protein belongs to the ferrochelatase family.

Its subcellular location is the cytoplasm. The catalysed reaction is heme b + 2 H(+) = protoporphyrin IX + Fe(2+). Its pathway is porphyrin-containing compound metabolism; protoheme biosynthesis; protoheme from protoporphyrin-IX: step 1/1. Functionally, catalyzes the ferrous insertion into protoporphyrin IX. The polypeptide is Ferrochelatase (Synechococcus sp. (strain CC9311)).